The following is a 697-amino-acid chain: MSISCTRNFFKRFCVEEYNMDTFKHSSFLSADLLPSLGARINQSTKLRKHIISPFDPRFRGWEMWLVILVIYSAWICPFEFAFITYKKDALFIIDNIVNGFFAIDIILTFFVAYLDSHSYLLVDKPKKIAIRYLSTWFAFDVCSTAPFQSLSLLFKYNGSEIGFRVLSMLRLWRLRRVSSLFARLEKDIRFNYFWTRCTKLISVTLFAVHCAGCFAYLIADQYHDPTKTWIGAVYPNFKETSVWSRYVTALYWSITTLTTTGYGDLHAENPREMLFFVFFMLFNLGFTSYLIGNMTNLVVHWTSRTRNFRDTVRAASEFASRNQLPPNIQDQMLSHICLKFKTEGLKQQEALNGLPKAIRSSIANYLFFPIVQNVYLFHGVSRNFLFQLVSDIDAEYFPPREDVILQNEAPTDLYILVSGAVDFTVYVGEEDQVQGKAVVGDAFGEIGVLCYTPQPFTVRTTELSQILRISKKSLMSAMRAHVEDGRVIMNNLFMKLRGQQSIAIDDPNSEPESLLKEWLVGGSKTGEGNASDQGHGHKYLQLHDSENIDMGSTEWRDSRRSGYGETKRVREHTIEIEEGEKPNKEFDGKGCSDADLTSFEFHSQEAYPYCRSNIQIKQHEAAKPKDKRVTIHLKSRDKDLSKLIILPASIEELLRLAGEKFGYSFTKVTNAENAEIDDEDVIRDGDHLYILINENS.

Residues 1–63 (MSISCTRNFF…PFDPRFRGWE (63 aa)) lie on the Cytoplasmic side of the membrane. Residues 64–84 (MWLVILVIYSAWICPFEFAFI) form a helical membrane-spanning segment. Over 85-91 (TYKKDAL) the chain is Extracellular. A helical transmembrane segment spans residues 92–112 (FIIDNIVNGFFAIDIILTFFV). The Cytoplasmic portion of the chain corresponds to 113–134 (AYLDSHSYLLVDKPKKIAIRYL). Residues 135–155 (STWFAFDVCSTAPFQSLSLLF) traverse the membrane as a helical segment. Residues 156 to 165 (KYNGSEIGFR) are Extracellular-facing. N-linked (GlcNAc...) asparagine glycosylation occurs at Asn158. Residues 166–186 (VLSMLRLWRLRRVSSLFARLE) form a helical; Voltage-sensor membrane-spanning segment. The Cytoplasmic portion of the chain corresponds to 187 to 200 (KDIRFNYFWTRCTK). Residues 201–221 (LISVTLFAVHCAGCFAYLIAD) form a helical membrane-spanning segment. At 222–248 (QYHDPTKTWIGAVYPNFKETSVWSRYV) the chain is on the extracellular side. The segment at residues 249–268 (TALYWSITTLTTTGYGDLHA) is an intramembrane region (pore-forming). At 269-272 (ENPR) the chain is on the extracellular side. A helical transmembrane segment spans residues 273-293 (EMLFFVFFMLFNLGFTSYLIG). At 294–697 (NMTNLVVHWT…HLYILINENS (404 aa)) the chain is on the cytoplasmic side. 377-496 (LFHGVSRNFL…RVIMNNLFMK (120 aa)) contacts a nucleoside 3',5'-cyclic phosphate. Residues 629–697 (RVTIHLKSRD…HLYILINENS (69 aa)) form the KHA domain.

It belongs to the potassium channel family. Plant (TC 1.A.1.4) subfamily. In terms of assembly, the potassium channel is probably composed of a homo- or heterotetrameric complex of pore-forming subunits. May interact with KAT1. Interacts with SLAC1. In terms of tissue distribution, expressed in guard cells of hypocotyls, stems leaves and petioles. Detected also in the phloem of minor veins and in flower at a lower level.

The protein localises to the membrane. In terms of biological role, highly selective inward-rectifying potassium channel. This voltage-dependent channel could mediate long-term potassium influx into guard cells leading to stomatal opening. Assuming opened or closed conformations in response to the voltage difference across the membrane, the channel is activated by hyperpolarization. The channel activity is enhanced upon external acidification. The sequence is that of Potassium channel KAT2 (KAT2) from Arabidopsis thaliana (Mouse-ear cress).